The chain runs to 459 residues: Phosphoglucosamine mutase (459 aa).

Residue S100 is the Phosphoserine intermediate of the active site. 4 residues coordinate Mg(2+): S100, D256, D258, and D260. S100 is subject to Phosphoserine.

The protein belongs to the phosphohexose mutase family. It depends on Mg(2+) as a cofactor. In terms of processing, activated by phosphorylation.

The enzyme catalyses alpha-D-glucosamine 1-phosphate = D-glucosamine 6-phosphate. Functionally, catalyzes the conversion of glucosamine-6-phosphate to glucosamine-1-phosphate. This chain is Phosphoglucosamine mutase, found in Heliobacterium modesticaldum (strain ATCC 51547 / Ice1).